A 323-amino-acid polypeptide reads, in one-letter code: Arginase (323 aa).

Mn(2+) is bound by residues His119, Asp142, His144, and Asp146. Substrate is bound by residues His144–Asn148, Ser155–Asn157, and Asp198. The Mn(2+) site is built by Asp247 and Asp249. Substrate contacts are provided by Thr261 and Glu292.

This sequence belongs to the arginase family. Homotrimer. The cofactor is Mn(2+).

It carries out the reaction L-arginine + H2O = urea + L-ornithine. It participates in nitrogen metabolism; urea cycle; L-ornithine and urea from L-arginine: step 1/1. In Schizosaccharomyces pombe (strain 972 / ATCC 24843) (Fission yeast), this protein is Arginase (car1).